Consider the following 475-residue polypeptide: Ribulose bisphosphate carboxylase large chain (475 aa).

A propeptide spanning residues 1–2 is cleaved from the precursor; that stretch reads MS. At proline 3 the chain carries N-acetylproline. Lysine 14 is subject to N6,N6,N6-trimethyllysine. 2 residues coordinate substrate: asparagine 123 and threonine 173. Residue lysine 175 is the Proton acceptor of the active site. A substrate-binding site is contributed by lysine 177. Positions 201, 203, and 204 each coordinate Mg(2+). The residue at position 201 (lysine 201) is an N6-carboxylysine. The active-site Proton acceptor is histidine 294. Substrate contacts are provided by arginine 295, histidine 327, and serine 379.

Belongs to the RuBisCO large chain family. Type I subfamily. In terms of assembly, heterohexadecamer of 8 large chains and 8 small chains; disulfide-linked. The disulfide link is formed within the large subunit homodimers. Mg(2+) serves as cofactor. Post-translationally, the disulfide bond which can form in the large chain dimeric partners within the hexadecamer appears to be associated with oxidative stress and protein turnover.

It localises to the plastid. Its subcellular location is the chloroplast. The enzyme catalyses 2 (2R)-3-phosphoglycerate + 2 H(+) = D-ribulose 1,5-bisphosphate + CO2 + H2O. It catalyses the reaction D-ribulose 1,5-bisphosphate + O2 = 2-phosphoglycolate + (2R)-3-phosphoglycerate + 2 H(+). In terms of biological role, ruBisCO catalyzes two reactions: the carboxylation of D-ribulose 1,5-bisphosphate, the primary event in carbon dioxide fixation, as well as the oxidative fragmentation of the pentose substrate in the photorespiration process. Both reactions occur simultaneously and in competition at the same active site. The sequence is that of Ribulose bisphosphate carboxylase large chain from Carpinus caroliniana (American hornbeam).